The chain runs to 312 residues: Acetyl-coenzyme A carboxylase carboxyl transferase subunit alpha (312 aa).

Residues 36 to 286 (ELEKEIEKTF…KTYFLESVKA (251 aa)) form the CoA carboxyltransferase C-terminal domain.

Belongs to the AccA family. As to quaternary structure, acetyl-CoA carboxylase is a heterohexamer composed of biotin carboxyl carrier protein (AccB), biotin carboxylase (AccC) and two subunits each of ACCase subunit alpha (AccA) and ACCase subunit beta (AccD).

The protein resides in the cytoplasm. The enzyme catalyses N(6)-carboxybiotinyl-L-lysyl-[protein] + acetyl-CoA = N(6)-biotinyl-L-lysyl-[protein] + malonyl-CoA. It participates in lipid metabolism; malonyl-CoA biosynthesis; malonyl-CoA from acetyl-CoA: step 1/1. In terms of biological role, component of the acetyl coenzyme A carboxylase (ACC) complex. First, biotin carboxylase catalyzes the carboxylation of biotin on its carrier protein (BCCP) and then the CO(2) group is transferred by the carboxyltransferase to acetyl-CoA to form malonyl-CoA. This chain is Acetyl-coenzyme A carboxylase carboxyl transferase subunit alpha, found in Sulfurovum sp. (strain NBC37-1).